Reading from the N-terminus, the 504-residue chain is Occludin (504 aa).

Residues 1–57 (MFSKKSYDGPPAGYGPPTGYGAPTADYGYGSPPPGSYYVDDAPQLFYKWTSPPGAVR) are Cytoplasmic-facing. Residues 51–253 (SPPGAVRGLQ…ICFFAQKTRS (203 aa)) enclose the MARVEL domain. A helical membrane pass occupies residues 58–80 (GLQAGVLVLCIAIFACVASTLAW). Over 81–123 (DYGYGLGGAYGTGLGGFYGSNYYGSGLSYSYGYGGYYGGVNQR) the chain is Extracellular. The helical transmembrane segment at 124-148 (TANGFMIAMAVLCFLAQLGLLVAAL) threads the bilayer. Topologically, residues 149–158 (SKSGATRSRR) are cytoplasmic. A helical membrane pass occupies residues 159–183 (FYLAVLVLSAVLAFVMLIASIVYIM). The Extracellular portion of the chain corresponds to 184–227 (GVNPQAQMSSGYYYSPLLAMCSQAYGSTYLNQYIYHYCTVDPQE). Cys-204 and Cys-221 are joined by a disulfide. A helical transmembrane segment spans residues 228–249 (AVAAVCGFLIVILLCLICFFAQ). The Cytoplasmic segment spans residues 250–504 (KTRSKIWRYG…MVSAYDKVRG (255 aa)). Residues 324–396 (PSGTYSSRGD…VESSDERDQE (73 aa)) are disordered. Residues 361 to 370 (PARRGRRRRR) are compositionally biased toward basic residues. Phosphotyrosine is present on residues Tyr-379 and Tyr-383. Residues 379-385 (YETDYTT) are interaction with TJP1. An OCEL domain is found at 396-504 (EQWASLYPPI…MVSAYDKVRG (109 aa)). A coiled-coil region spans residues 412–471 (QRYKQEFDTDLKRYKQLCAEMDSINDRLNQLSRRLDSITEDSPQYQDVAEEYNQLKDLKR).

It belongs to the ELL/occludin family. In terms of assembly, interacts with TJP1 and TJP3. Phosphorylated. As to expression, localized at tight junctions of both epithelial and endothelial cells. Highly expressed in lung and liver. Expressed at a lower level in brain.

The protein localises to the cell membrane. It localises to the cell junction. The protein resides in the tight junction. May play a role in the formation and regulation of the tight junction (TJ) paracellular permeability barrier. Interacts with ZO-1. This Gallus gallus (Chicken) protein is Occludin (OCLN).